A 393-amino-acid polypeptide reads, in one-letter code: 8-amino-7-oxononanoate synthase (393 aa).

Residue Arg-18 coordinates substrate. Residue 105–106 (GY) coordinates pyridoxal 5'-phosphate. His-130 is a binding site for substrate. 3 residues coordinate pyridoxal 5'-phosphate: Ser-178, His-206, and Thr-234. Lys-237 bears the N6-(pyridoxal phosphate)lysine mark. Residue Thr-353 participates in substrate binding.

This sequence belongs to the class-II pyridoxal-phosphate-dependent aminotransferase family. BioF subfamily. Homodimer. The cofactor is pyridoxal 5'-phosphate.

It catalyses the reaction 6-carboxyhexanoyl-[ACP] + L-alanine + H(+) = (8S)-8-amino-7-oxononanoate + holo-[ACP] + CO2. It participates in cofactor biosynthesis; biotin biosynthesis. Its function is as follows. Catalyzes the decarboxylative condensation of pimeloyl-[acyl-carrier protein] and L-alanine to produce 8-amino-7-oxononanoate (AON), [acyl-carrier protein], and carbon dioxide. The polypeptide is 8-amino-7-oxononanoate synthase (Geotalea daltonii (strain DSM 22248 / JCM 15807 / FRC-32) (Geobacter daltonii)).